The chain runs to 1406 residues: Carboxypeptidase D (1406 aa).

A signal peptide spans 1-25 (MPTLGLLFASIGIAVLAMGVPHCRG). The Extracellular segment spans residues 26–1312 (YTIKEDESFL…VNEHVFGLPR (1287 aa)). 2 Peptidase M14 domains span residues 39–335 (HYAS…LRQA) and 455–760 (EHHN…IEQV). Zn(2+)-binding residues include histidine 101 and glutamate 104. Asparagine 133 carries N-linked (GlcNAc...) asparagine glycosylation. Intrachain disulfides connect cysteine 156–cysteine 309, cysteine 236–cysteine 237, and cysteine 268–cysteine 308. Histidine 217 contacts Zn(2+). The N-linked (GlcNAc...) asparagine glycan is linked to asparagine 269. Glutamate 305 (proton donor/acceptor) is an active-site residue. The N-linked (GlcNAc...) asparagine glycan is linked to asparagine 458. The Zn(2+) site is built by histidine 517 and glutamate 520. Residues asparagine 549 and asparagine 612 are each glycosylated (N-linked (GlcNAc...) asparagine). Histidine 626 provides a ligand contact to Zn(2+). N-linked (GlcNAc...) asparagine glycosylation is present at asparagine 652. Catalysis depends on glutamate 730, which acts as the Proton donor/acceptor. Residues asparagine 787, asparagine 808, asparagine 981, asparagine 1152, and asparagine 1251 are each glycosylated (N-linked (GlcNAc...) asparagine). The 259-residue stretch at 863 to 1121 (RYHTNPQVRA…DKIKNFLALV (259 aa)) folds into the Peptidase M14 3 domain. A helical transmembrane segment spans residues 1313–1333 (FLFILCASVLIIVGVIVCVLC). Over 1334–1406 (AQFWFYRRHR…TNYSFIIQAA (73 aa)) the chain is Cytoplasmic. The Cell attachment site signature appears at 1343–1345 (RGD). The residue at position 1380 (serine 1380) is a Phosphoserine.

It belongs to the peptidase M14 family. As to quaternary structure, monomer. Requires Zn(2+) as cofactor. Expressed in the central nervous system (CNS) of adults and larvae. In the adult brain, increased levels of expression in the mushroom body (MB) and neurosecretory cells.

It is found in the membrane. Its subcellular location is the cytoplasm. The protein localises to the perinuclear region. The protein resides in the golgi apparatus. It localises to the trans-Golgi network. It is found in the secreted. The enzyme catalyses Releases C-terminal Arg and Lys from polypeptides.. Its activity is regulated as follows. Inhibited by 2-guanidinoethylmercaptosuccinic acid (GEMSA). Its function is as follows. Metallocarboxypeptidase that catalyzes the release of C-terminal arginine or lysine residues from peptides and proteins. Functionally important for processing a broad range of proteins including growth factors, peptide hormones (such as Akh) and neuropeptides. Consequently, it is involved in a wide range of processes including viability, memory formation, locomotive activity, wing formation, and peptide-regulated behaviors such as starvation-induced hyperactivity, appetitive gustatory preference, and cold and ethanol sensitivity. Key enzyme in neuropeptide processing. Involved in regulation of memory formation, possibly via the insulin pathway in neurosecretory cells. This Drosophila melanogaster (Fruit fly) protein is Carboxypeptidase D.